Reading from the N-terminus, the 48-residue chain is ATP synthase protein 8 (48 aa).

The helical transmembrane segment at 4–24 (LVPFFFVNQVVYAFVILTVLI) threads the bilayer.

The protein belongs to the ATPase protein 8 family. In terms of assembly, F-type ATPases have 2 components, CF(1) - the catalytic core - and CF(0) - the membrane proton channel.

Its subcellular location is the mitochondrion membrane. Mitochondrial membrane ATP synthase (F(1)F(0) ATP synthase or Complex V) produces ATP from ADP in the presence of a proton gradient across the membrane which is generated by electron transport complexes of the respiratory chain. F-type ATPases consist of two structural domains, F(1) - containing the extramembraneous catalytic core and F(0) - containing the membrane proton channel, linked together by a central stalk and a peripheral stalk. During catalysis, ATP synthesis in the catalytic domain of F(1) is coupled via a rotary mechanism of the central stalk subunits to proton translocation. Part of the complex F(0) domain. Minor subunit located with subunit a in the membrane. In Aspergillus amstelodami, this protein is ATP synthase protein 8 (atp8).